We begin with the raw amino-acid sequence, 691 residues long: Elongation factor G (691 aa).

Positions 8–283 (DMQRNIGIMA…AVVDFLPSPV (276 aa)) constitute a tr-type G domain. GTP is bound by residues 17-24 (AHIDAGKT), 81-85 (DTPGH), and 135-138 (NKMD).

Belongs to the TRAFAC class translation factor GTPase superfamily. Classic translation factor GTPase family. EF-G/EF-2 subfamily.

The protein localises to the cytoplasm. In terms of biological role, catalyzes the GTP-dependent ribosomal translocation step during translation elongation. During this step, the ribosome changes from the pre-translocational (PRE) to the post-translocational (POST) state as the newly formed A-site-bound peptidyl-tRNA and P-site-bound deacylated tRNA move to the P and E sites, respectively. Catalyzes the coordinated movement of the two tRNA molecules, the mRNA and conformational changes in the ribosome. The chain is Elongation factor G from Nitratidesulfovibrio vulgaris (strain ATCC 29579 / DSM 644 / CCUG 34227 / NCIMB 8303 / VKM B-1760 / Hildenborough) (Desulfovibrio vulgaris).